The chain runs to 279 residues: Shikimate dehydrogenase (NADP(+)) (279 aa).

Shikimate-binding positions include 20–22 and threonine 67; that span reads SRS. Residue lysine 71 is the Proton acceptor of the active site. Aspartate 83 is a binding site for NADP(+). Residues asparagine 92 and aspartate 108 each coordinate shikimate. Residues 134 to 138 and leucine 223 each bind NADP(+); that span reads GAGGA. Tyrosine 225 contributes to the shikimate binding site. An NADP(+)-binding site is contributed by glycine 246.

The protein belongs to the shikimate dehydrogenase family. In terms of assembly, homodimer.

The enzyme catalyses shikimate + NADP(+) = 3-dehydroshikimate + NADPH + H(+). The protein operates within metabolic intermediate biosynthesis; chorismate biosynthesis; chorismate from D-erythrose 4-phosphate and phosphoenolpyruvate: step 4/7. Functionally, involved in the biosynthesis of the chorismate, which leads to the biosynthesis of aromatic amino acids. Catalyzes the reversible NADPH linked reduction of 3-dehydroshikimate (DHSA) to yield shikimate (SA). This Cereibacter sphaeroides (strain KD131 / KCTC 12085) (Rhodobacter sphaeroides) protein is Shikimate dehydrogenase (NADP(+)).